A 251-amino-acid chain; its full sequence is uncharacterized protein (251 aa).

This is an uncharacterized protein from Methanocaldococcus jannaschii (strain ATCC 43067 / DSM 2661 / JAL-1 / JCM 10045 / NBRC 100440) (Methanococcus jannaschii).